The sequence spans 226 residues: Small ribosomal subunit protein uS2c (226 aa).

This sequence belongs to the universal ribosomal protein uS2 family.

The protein resides in the plastid. The protein localises to the chloroplast. In Phaeodactylum tricornutum (strain CCAP 1055/1), this protein is Small ribosomal subunit protein uS2c (rps2).